The following is a 512-amino-acid chain: Glycerol-3-phosphate dehydrogenase (512 aa).

16-44 (DVAVVGGGINGVGIAADAAGRGLSVFLCE) is an FAD binding site.

This sequence belongs to the FAD-dependent glycerol-3-phosphate dehydrogenase family. The cofactor is FAD.

The protein localises to the cytoplasm. The catalysed reaction is a quinone + sn-glycerol 3-phosphate = dihydroxyacetone phosphate + a quinol. The sequence is that of Glycerol-3-phosphate dehydrogenase (glpD) from Pseudomonas aeruginosa (strain ATCC 15692 / DSM 22644 / CIP 104116 / JCM 14847 / LMG 12228 / 1C / PRS 101 / PAO1).